A 542-amino-acid chain; its full sequence is Putative CTP synthase (542 aa).

Residues 1 to 277 (MEIDLMKHIQ…HKTILDFFSL (277 aa)) are amidoligase domain. Serine 23 is a CTP binding site. Serine 23 is a binding site for UTP. ATP is bound by residues 24-29 (SLGKGV) and aspartate 81. Mg(2+) contacts are provided by aspartate 81 and glutamate 151. Residues 158 to 160 (DIE), 198 to 203 (KTKPTQ), and lysine 234 contribute to the CTP site. Residues 198-203 (KTKPTQ) and lysine 234 each bind UTP. Positions 310–542 (YVELPDAYKS…LKMSLKIKES (233 aa)) constitute a Glutamine amidotransferase type-1 domain. Glutamate 517 is an active-site residue.

The protein belongs to the CTP synthase family. As to quaternary structure, homotetramer.

The catalysed reaction is UTP + L-glutamine + ATP + H2O = CTP + L-glutamate + ADP + phosphate + 2 H(+). It catalyses the reaction L-glutamine + H2O = L-glutamate + NH4(+). It carries out the reaction UTP + NH4(+) + ATP = CTP + ADP + phosphate + 2 H(+). Its pathway is pyrimidine metabolism; CTP biosynthesis via de novo pathway; CTP from UDP: step 2/2. Allosterically activated by GTP, when glutamine is the substrate; GTP has no effect on the reaction when ammonia is the substrate. The allosteric effector GTP functions by stabilizing the protein conformation that binds the tetrahedral intermediate(s) formed during glutamine hydrolysis. Inhibited by the product CTP, via allosteric rather than competitive inhibition. In terms of biological role, catalyzes the ATP-dependent amination of UTP to CTP with either L-glutamine or ammonia as the source of nitrogen. Regulates intracellular CTP levels through interactions with the four ribonucleotide triphosphates. The sequence is that of Putative CTP synthase from Ureaplasma parvum serovar 3 (strain ATCC 700970).